Consider the following 340-residue polypeptide: Leucine-rich repeat-containing protein 23 (340 aa).

The segment covering M1–E27 has biased composition (acidic residues). A disordered region spans residues M1–E38. LRR repeat units follow at residues H89–T110, H111–Q134, S177–P197, K198–S219, N220–M241, and S243–R264. Residues A205 to V340 form an interaction with RSPH9 region. Residues N277–I315 enclose the LRRCT domain. Positions E305 to D328 form a coiled coil. Residues Q317–V340 form a disordered region. Residues Q323–M333 are compositionally biased toward acidic residues.

Component of the axonemal radial spoke complex. Interacts with RSPH3A and RSPH3B. Interacts with RSPH9. As to expression, expressed in the testis (at protein level).

It is found in the cytoplasm. It localises to the cytoskeleton. The protein resides in the flagellum axoneme. Its function is as follows. Essential for sperm motility and male fertility. Plays an important role in the proper assembly of the third radial spoke (RS3) head and the bridge structure between RS2 and RS3 in the sperm flagella. The sequence is that of Leucine-rich repeat-containing protein 23 (Lrrc23) from Mus musculus (Mouse).